The primary structure comprises 394 residues: NAD(P)H-quinone oxidoreductase subunit H (394 aa).

It belongs to the complex I 49 kDa subunit family. NDH-1 can be composed of about 15 different subunits; different subcomplexes with different compositions have been identified which probably have different functions.

The protein localises to the cellular thylakoid membrane. It catalyses the reaction a plastoquinone + NADH + (n+1) H(+)(in) = a plastoquinol + NAD(+) + n H(+)(out). It carries out the reaction a plastoquinone + NADPH + (n+1) H(+)(in) = a plastoquinol + NADP(+) + n H(+)(out). NDH-1 shuttles electrons from an unknown electron donor, via FMN and iron-sulfur (Fe-S) centers, to quinones in the respiratory and/or the photosynthetic chain. The immediate electron acceptor for the enzyme in this species is believed to be plastoquinone. Couples the redox reaction to proton translocation, and thus conserves the redox energy in a proton gradient. Cyanobacterial NDH-1 also plays a role in inorganic carbon-concentration. The sequence is that of NAD(P)H-quinone oxidoreductase subunit H from Synechococcus sp. (strain ATCC 27144 / PCC 6301 / SAUG 1402/1) (Anacystis nidulans).